Consider the following 89-residue polypeptide: ICNGQWTSVGSAGLYYTIKADSMCVDIHYTDGFIQPSCQGLQVIGPCNRYQNGPRDFVACQTSGGSGHPICIQSTNGNIELCANCYCPQ.

Residue Gln-89 is modified to Glutamine amide.

In terms of assembly, homodimer. Contains disulfide bonds which may also be involved in dimerization.

Functionally, blocks calcium currents via interaction with a yet unknown target protein. Has no effect on L-type, T-type, N-type or P/Q-type voltage-gated calcium channels (VGCC). Has no effect on voltage-gated potassium or chloride channels. Blocks non-L-type VGCC calcium currents in mouse duodenal myocytes (IC(50)=0.2 uM). Blocks calcium influx induced by hypoxia/reoxygenation in rat hepatocytes. The polypeptide is Mapacalcine (Pione vastifica (Boring sponge)).